The chain runs to 84 residues: ATP synthase subunit c (84 aa).

The next 2 helical transmembrane spans lie at 9–29 (IIGA…GFAI) and 54–74 (IVAG…LLFI).

It belongs to the ATPase C chain family. As to quaternary structure, F-type ATPases have 2 components, F(1) - the catalytic core - and F(0) - the membrane proton channel. F(1) has five subunits: alpha(3), beta(3), gamma(1), delta(1), epsilon(1). F(0) has three main subunits: a(1), b(2) and c(10-14). The alpha and beta chains form an alternating ring which encloses part of the gamma chain. F(1) is attached to F(0) by a central stalk formed by the gamma and epsilon chains, while a peripheral stalk is formed by the delta and b chains.

It localises to the cell inner membrane. In terms of biological role, f(1)F(0) ATP synthase produces ATP from ADP in the presence of a proton or sodium gradient. F-type ATPases consist of two structural domains, F(1) containing the extramembraneous catalytic core and F(0) containing the membrane proton channel, linked together by a central stalk and a peripheral stalk. During catalysis, ATP synthesis in the catalytic domain of F(1) is coupled via a rotary mechanism of the central stalk subunits to proton translocation. Its function is as follows. Key component of the F(0) channel; it plays a direct role in translocation across the membrane. A homomeric c-ring of between 10-14 subunits forms the central stalk rotor element with the F(1) delta and epsilon subunits. This Haemophilus influenzae (strain PittEE) protein is ATP synthase subunit c.